We begin with the raw amino-acid sequence, 474 residues long: MTTVPKNAVAKTLYQKVWDAHVVATPEGEAPIIYVDRHLVHEVTSPQAFSGLKVAGRKLRAPEKTFATMDHNTSTRSASLDALSPMARTQVETLAQNCKDFGVRLYDIHHPNQGIVHVMGPELGITFPGTVIVCGDSHTATHGAFGALAFGIGTSEVEHVLATQTLRQLKAKTMKIEVRGHVSDGVTAKDIVLAIIGKIGMDGGTGYVVEFCGEAIEALSMEGRMTVCNMAIEMGAKAGMVAPDQTTFDYLAGREFAPKGEDWAEAVAYWQAIKTDDGAVFDAVVELDAADIAPQLTWGTNPGQVVAIDGKVPNPLDEANPSTRASMEKALEYIGLSAGTPMTDISINKVFIGSCTNSRIEDLRSAAVHAKGRKVASGVTAIVVPGSGQVKAQAEAEGLDKIFIEAGFEWRLPGCSMCLAMNDDRLEAGDRCASTSNRNFEGRQGRGSRTHLVSPAMAAAAAVAGHFVDIRKPY.

[4Fe-4S] cluster contacts are provided by Cys-355, Cys-415, and Cys-418.

Belongs to the aconitase/IPM isomerase family. LeuC type 1 subfamily. Heterodimer of LeuC and LeuD. [4Fe-4S] cluster is required as a cofactor.

It catalyses the reaction (2R,3S)-3-isopropylmalate = (2S)-2-isopropylmalate. The protein operates within amino-acid biosynthesis; L-leucine biosynthesis; L-leucine from 3-methyl-2-oxobutanoate: step 2/4. Its function is as follows. Catalyzes the isomerization between 2-isopropylmalate and 3-isopropylmalate, via the formation of 2-isopropylmaleate. This is 3-isopropylmalate dehydratase large subunit from Shewanella putrefaciens (strain CN-32 / ATCC BAA-453).